We begin with the raw amino-acid sequence, 605 residues long: MAKVDTTERLAELRKLMKERNVDIYMVPSEDSHQSEYIAPCDARRGSAGYAVITHDKAALATDGRYFNQAEKQLDGNWELLKQGIQDVPTIQDWTADQVEGGKVVAVDPSVVTAADARKLADKIKKKGGEYKAVDDNLVDKIWSDRPSRPHEKVIVQPIEFSGKSFEDKIEDLRKELEKKKSLGFVVSMLDEIAWLFNLRGSDIPYNPVFFSYAVVTPTTVTLYVDDHKLPEEVKKHLGDKVTIRPYNAIFEELTTLSKEAFTKDKADATSKFLTSSRASWALNKALGGEDRVEETRSPVGDAKAVKNEVELEGMRQCHLRDGAALSEYFAWLEDQLINKKAELDEVDGADKLEAIRKKHDKFMGLSFDTISSTGANAAVIHYKPEKGECAVIDAKAIYLCDSGAQYRDGTTDTTRTVHFTEPTEMEKKAYTLVLKGNMALERVKFPKGTTGFALDSLARQFLWAEGLDYRHGTGHGVGSFLNVHEGPIGIGTRVQYSEVSLAVGNVVSDEPGYYEDGKFGIRIENMIMVKEVETSHKFGDKPYLGFEHVTMTPHCRNLVDMSLLGEDEKQFINDYHKEVYEKTSGYFEDDALTLKWLKRETAPY.

Residues Asp402, Asp413, Glu511, and Glu525 each contribute to the Mn(2+) site.

The protein belongs to the peptidase M24B family. It depends on Mn(2+) as a cofactor.

The catalysed reaction is Release of any N-terminal amino acid, including proline, that is linked to proline, even from a dipeptide or tripeptide.. In terms of biological role, catalyzes the removal of a penultimate prolyl residue from the N-termini of peptides. The protein is Probable Xaa-Pro aminopeptidase P (AMPP) of Leptosphaeria maculans (strain JN3 / isolate v23.1.3 / race Av1-4-5-6-7-8) (Blackleg fungus).